Consider the following 173-residue polypeptide: Alpha-crystallin A chain (173 aa).

Met1 bears the N-acetylmethionine mark. The required for complex formation with BFSP1 and BFSP2 stretch occupies residues 1-63 (MDVTIQHPWF…RTVLDSGISE (63 aa)). Residue Gln6 is modified to Deamidated glutamine; partial. The residue at position 45 (Ser45) is a Phosphoserine. Gln50 carries the deamidated glutamine; partial modification. The sHSP domain occupies 52–162 (LFRTVLDSGI…GHSERAIPVS (111 aa)). Lys70 carries the N6-acetyllysine modification. Gln90 is modified (deamidated glutamine; partial). Lys99 is subject to N6-acetyllysine. His100 is a Zn(2+) binding site. Position 101 is a deamidated asparagine; partial (Asn101). 2 residues coordinate Zn(2+): Glu102 and His107. Ser122 carries the phosphoserine modification. A Deamidated asparagine; partial modification is found at Asn123. The disordered stretch occupies residues 145-173 (KVQSGLDAGHSERAIPVSREEKPSSAPSS). At Gln147 the chain carries Deamidated glutamine; partial. The span at 153–167 (GHSERAIPVSREEKP) shows a compositional bias: basic and acidic residues. His154 contacts Zn(2+). O-linked (GlcNAc) serine glycosylation occurs at Ser162.

This sequence belongs to the small heat shock protein (HSP20) family. As to quaternary structure, heteromer composed of three CRYAA and one CRYAB subunits. Inter-subunit bridging via zinc ions enhances stability, which is crucial as there is no protein turn over in the lens. Can also form homodimers and homotetramers (dimers of dimers) which serve as the building blocks of homooligomers. Within homooligomers, the zinc-binding motif is created from residues of 3 different molecules. His-100 and Glu-102 from one molecule are ligands of the zinc ion, and His-107 and His-154 residues from additional molecules complete the site with tetrahedral coordination geometry. Part of a complex required for lens intermediate filament formation composed of BFSP1, BFSP2 and CRYAA. In terms of processing, acetylation at Lys-70 may increase chaperone activity. Post-translationally, undergoes age-dependent proteolytical cleavage at the C-terminus.

Its subcellular location is the cytoplasm. The protein localises to the nucleus. Contributes to the transparency and refractive index of the lens. Acts as a chaperone, preventing aggregation of various proteins under a wide range of stress conditions. Required for the correct formation of lens intermediate filaments as part of a complex composed of BFSP1, BFSP2 and CRYAA. The chain is Alpha-crystallin A chain (CRYAA) from Oryctolagus cuniculus (Rabbit).